The chain runs to 170 residues: Peptide deformylase 1 (170 aa).

Cys-92 and His-135 together coordinate Fe cation. Residue Glu-136 is part of the active site. His-139 lines the Fe cation pocket.

Belongs to the polypeptide deformylase family. The cofactor is Fe(2+).

It catalyses the reaction N-terminal N-formyl-L-methionyl-[peptide] + H2O = N-terminal L-methionyl-[peptide] + formate. Functionally, removes the formyl group from the N-terminal Met of newly synthesized proteins. Requires at least a dipeptide for an efficient rate of reaction. N-terminal L-methionine is a prerequisite for activity but the enzyme has broad specificity at other positions. The sequence is that of Peptide deformylase 1 from Coxiella burnetii (strain RSA 493 / Nine Mile phase I).